Here is a 164-residue protein sequence, read N- to C-terminus: Cyclic pyranopterin monophosphate synthase (164 aa).

Substrate is bound by residues 75-77 and 116-117; these read MCH and ME. Asp-131 is a catalytic residue.

This sequence belongs to the MoaC family. As to quaternary structure, homohexamer; trimer of dimers.

It catalyses the reaction (8S)-3',8-cyclo-7,8-dihydroguanosine 5'-triphosphate = cyclic pyranopterin phosphate + diphosphate. The protein operates within cofactor biosynthesis; molybdopterin biosynthesis. Its function is as follows. Catalyzes the conversion of (8S)-3',8-cyclo-7,8-dihydroguanosine 5'-triphosphate to cyclic pyranopterin monophosphate (cPMP). In Staphylococcus aureus (strain bovine RF122 / ET3-1), this protein is Cyclic pyranopterin monophosphate synthase.